The primary structure comprises 525 residues: Protein kinase PINOID 2 (525 aa).

The interval 1–27 is disordered; the sequence is MANSSIFYKDNESDYESSTVGPDSSRR. One can recognise a Protein kinase domain in the interval 87 to 465; sequence FRLLKRLGSG…SIEIKRHEFF (379 aa). ATP-binding positions include 93–101 and Lys-118; that span reads LGSGDIGSV. Catalysis depends on Asp-214, which acts as the Proton acceptor. Residues 466-525 form the AGC-kinase C-terminal domain; sequence EGVNWALIRSIKPPWVPKEETSHKTKGDNRSVNYYLPPRFMMSRKERNEPYHVSNYFDYF.

It belongs to the protein kinase superfamily. Ser/Thr protein kinase family.

It carries out the reaction L-seryl-[protein] + ATP = O-phospho-L-seryl-[protein] + ADP + H(+). It catalyses the reaction L-threonyl-[protein] + ATP = O-phospho-L-threonyl-[protein] + ADP + H(+). In terms of biological role, serine/threonine-protein kinase involved in the regulation of auxin signaling. Plays a minor role in the regulation of cellular auxin efflux and cotyledon organogenesis. The protein is Protein kinase PINOID 2 (PID2) of Arabidopsis thaliana (Mouse-ear cress).